A 677-amino-acid chain; its full sequence is Methionine--tRNA ligase (677 aa).

The 'HIGH' region signature appears at 15–25; it reads PYANGSIHLGH. Positions 146, 149, 159, and 162 each coordinate Zn(2+). The 'KMSKS' region motif lies at 333-337; it reads KMSKS. Lysine 336 contributes to the ATP binding site. The tRNA-binding domain maps to 575-677; the sequence is DFAKIDLRVA…SGAKPGQQVK (103 aa).

The protein belongs to the class-I aminoacyl-tRNA synthetase family. MetG type 1 subfamily. Homodimer. It depends on Zn(2+) as a cofactor.

The protein resides in the cytoplasm. It carries out the reaction tRNA(Met) + L-methionine + ATP = L-methionyl-tRNA(Met) + AMP + diphosphate. Is required not only for elongation of protein synthesis but also for the initiation of all mRNA translation through initiator tRNA(fMet) aminoacylation. The sequence is that of Methionine--tRNA ligase from Cronobacter sakazakii (strain ATCC BAA-894) (Enterobacter sakazakii).